The following is a 453-amino-acid chain: Armadillo repeat-containing X-linked protein 1 (453 aa).

The Mitochondrial intermembrane segment spans residues 1–6 (MGRTRE). 2 mitochondrion outer membrane (MOM)-targeting sequence regions span residues 1-6 (MGRTRE) and 26-36 (RLAWGRDENEK). The helical; Signal-anchor transmembrane segment at 7-29 (AGCVAAGVVIGAGACYCVYRLAW) threads the bilayer. At 30–453 (GRDENEKIWD…VKVLKVLTKL (424 aa)) the chain is on the cytoplasmic side. A disordered region spans residues 140–182 (PSLPCPGGRGGGCHPTRSGSRAGGRASGKSKGKARSKSTRAPA). The segment covering 167–177 (GKSKGKARSKS) has biased composition (basic residues). 4 ARM repeats span residues 195–235 (PYKI…NNAA), 237–276 (SFNQ…NLSV), 358–398 (PAMT…NIND), and 415–453 (SSLF…LTKL).

Belongs to the eutherian X-chromosome-specific Armcx family. In terms of assembly, interacts with MIRO1.

It localises to the mitochondrion. Its subcellular location is the mitochondrion outer membrane. Its function is as follows. Regulates mitochondrial transport during axon regeneration. Increases the proportion of motile mitochondria by recruiting stationary mitochondria into the motile pool. Enhances mitochondria movement and neurite growth in both adult axons and embryonic neurons. Promotes neuronal survival and axon regeneration after nerve injury. May link mitochondria to the Trak1-kinesin motor complex via its interaction with MIRO1. The polypeptide is Armadillo repeat-containing X-linked protein 1 (ARMCX1) (Pongo abelii (Sumatran orangutan)).